Consider the following 2278-residue polypeptide: Protein Ycf2 (2278 aa).

Position 1632-1639 (1632-1639 (GSIGTGRS)) interacts with ATP.

The protein belongs to the Ycf2 family.

The protein resides in the plastid. Its subcellular location is the chloroplast stroma. Probable ATPase of unknown function. Its presence in a non-photosynthetic plant (Epifagus virginiana) and experiments in tobacco indicate that it has an essential function which is probably not related to photosynthesis. In Solanum bulbocastanum (Wild potato), this protein is Protein Ycf2.